Reading from the N-terminus, the 288-residue chain is Pantothenate synthetase (288 aa).

An ATP-binding site is contributed by 31 to 38; sequence MGNLHRGH. Catalysis depends on H38, which acts as the Proton donor. Q62 provides a ligand contact to (R)-pantoate. Residue Q62 coordinates beta-alanine. 150 to 153 provides a ligand contact to ATP; it reads GQKD. (R)-pantoate is bound at residue Q156. ATP contacts are provided by residues I179 and 187-190; that span reads LSSR.

It belongs to the pantothenate synthetase family. In terms of assembly, homodimer.

It is found in the cytoplasm. It carries out the reaction (R)-pantoate + beta-alanine + ATP = (R)-pantothenate + AMP + diphosphate + H(+). It participates in cofactor biosynthesis; (R)-pantothenate biosynthesis; (R)-pantothenate from (R)-pantoate and beta-alanine: step 1/1. Functionally, catalyzes the condensation of pantoate with beta-alanine in an ATP-dependent reaction via a pantoyl-adenylate intermediate. In Wigglesworthia glossinidia brevipalpis, this protein is Pantothenate synthetase.